We begin with the raw amino-acid sequence, 556 residues long: Polypyrimidine tract-binding protein 1 (556 aa).

Met1 carries the post-translational modification N-acetylmethionine. Ser16 is subject to Phosphoserine. The tract at residues 35 to 54 (ASAANGNDSKKFKGDNRSTG) is disordered. RRM domains are found at residues 58-142 (RVIH…SSPN), 183-259 (LRII…FSKL), and 362-436 (SVLL…LSKH). A Glycyl lysine isopeptide (Lys-Gly) (interchain with G-Cter in SUMO2) cross-link involves residue Lys64. Position 126 is a phosphotyrosine (Tyr126). Thr137 is modified (phosphothreonine). Ser140 carries the post-translational modification Phosphoserine. A Glycyl lysine isopeptide (Lys-Gly) (interchain with G-Cter in SUMO2) cross-link involves residue Lys217. Residues 436 to 458 (HQSVQLPREGQEDQGLTKDYGSS) form a disordered region. Position 458 is a phosphoserine (Ser458). The RRM 4 domain occupies 479 to 554 (ATLHLSNIPP…HHLRVSFSKS (76 aa)).

As to quaternary structure, monomer. Part of a ternary complex containing KHSRP, PTBP1, PTBP2 and HNRPH1. Interacts with RAVER1 and SFPQ.

It is found in the nucleus. Functionally, plays a role in pre-mRNA splicing and in the regulation of alternative splicing events. Activates exon skipping of its own pre-mRNA during muscle cell differentiation. Binds to the polypyrimidine tract of introns. May promote RNA looping when bound to two separate polypyrimidine tracts in the same pre-mRNA. May promote the binding of U2 snRNP to pre-mRNA. Cooperates with RAVER1 to modulate switching between mutually exclusive exons during maturation of the TPM1 pre-mRNA. Represses the splicing of MAPT/Tau exon 10. Binds to polypyrimidine-rich controlling element (PCE) of CFTR and promotes exon skipping of CFTR exon 9, thereby antagonizing TIA1 and its role in exon inclusion of CFTR exon 9. Plays a role in the splicing of pyruvate kinase PKM by binding repressively to a polypyrimidine tract flanking PKM exon 9, inhibiting exon 9 inclusion and resulting in exon 10 inclusion and production of the PKM M2 isoform. This Rattus norvegicus (Rat) protein is Polypyrimidine tract-binding protein 1 (Ptbp1).